The primary structure comprises 272 residues: HMP-PP phosphatase (272 aa).

The active-site Nucleophile is Asp8. Mg(2+) contacts are provided by Asp8, Asp10, and Asp212.

This sequence belongs to the HAD-like hydrolase superfamily. Cof family. Mg(2+) is required as a cofactor.

It catalyses the reaction 4-amino-2-methyl-5-(diphosphooxymethyl)pyrimidine + H2O = 4-amino-2-methyl-5-(phosphooxymethyl)pyrimidine + phosphate + H(+). Functionally, catalyzes the hydrolysis of 4-amino-2-methyl-5-hydroxymethylpyrimidine pyrophosphate (HMP-PP) to 4-amino-2-methyl-5-hydroxymethylpyrimidine phosphate (HMP-P). This is HMP-PP phosphatase from Shigella flexneri serotype 5b (strain 8401).